A 301-amino-acid polypeptide reads, in one-letter code: Porin (301 aa).

As to quaternary structure, homotrimer.

The protein localises to the cell outer membrane. In terms of biological role, forms channels that allow the passive diffusion of small hydrophilic solutes up to an exclusion limit of about 0.6 kDa. This Rhodobacter capsulatus (Rhodopseudomonas capsulata) protein is Porin.